Here is a 162-residue protein sequence, read N- to C-terminus: Protein FAM167B (162 aa).

The protein belongs to the FAM167 (SEC) family.

In Mus musculus (Mouse), this protein is Protein FAM167B (Fam167b).